Here is a 190-residue protein sequence, read N- to C-terminus: Protein GrpE (190 aa).

Over residues 1-18 (MTETPNTSSEEIQTSEPS) the composition is skewed to polar residues. Residues 1 to 21 (MTETPNTSSEEIQTSEPSPDN) are disordered.

The protein belongs to the GrpE family. As to quaternary structure, homodimer.

It localises to the cytoplasm. Its function is as follows. Participates actively in the response to hyperosmotic and heat shock by preventing the aggregation of stress-denatured proteins, in association with DnaK and GrpE. It is the nucleotide exchange factor for DnaK and may function as a thermosensor. Unfolded proteins bind initially to DnaJ; upon interaction with the DnaJ-bound protein, DnaK hydrolyzes its bound ATP, resulting in the formation of a stable complex. GrpE releases ADP from DnaK; ATP binding to DnaK triggers the release of the substrate protein, thus completing the reaction cycle. Several rounds of ATP-dependent interactions between DnaJ, DnaK and GrpE are required for fully efficient folding. The protein is Protein GrpE of Chlamydia trachomatis serovar L2b (strain UCH-1/proctitis).